A 317-amino-acid chain; its full sequence is Methionyl-tRNA formyltransferase (317 aa).

(6S)-5,6,7,8-tetrahydrofolate is bound at residue 109-112; the sequence is SLLP.

It belongs to the Fmt family.

The enzyme catalyses L-methionyl-tRNA(fMet) + (6R)-10-formyltetrahydrofolate = N-formyl-L-methionyl-tRNA(fMet) + (6S)-5,6,7,8-tetrahydrofolate + H(+). Its function is as follows. Attaches a formyl group to the free amino group of methionyl-tRNA(fMet). The formyl group appears to play a dual role in the initiator identity of N-formylmethionyl-tRNA by promoting its recognition by IF2 and preventing the misappropriation of this tRNA by the elongation apparatus. This is Methionyl-tRNA formyltransferase from Halalkalibacterium halodurans (strain ATCC BAA-125 / DSM 18197 / FERM 7344 / JCM 9153 / C-125) (Bacillus halodurans).